We begin with the raw amino-acid sequence, 89 residues long: Myrmicitoxin(1)-Pm2a (89 aa).

The N-terminal stretch at M1–C22 is a signal peptide. The propeptide occupies A23–P61. N88 carries the post-translational modification Asparagine amide.

The protein belongs to the formicidae venom clade 1 family. In terms of tissue distribution, expressed by the venom gland.

The protein localises to the secreted. Its function is as follows. Toxin that potently modulates mammalian voltage-gated sodium (Nav) channels, reducing the voltage threshold for activation and inhibiting channel inactivation. Shows activity on hNav1.6/SCN8A (EC(50)=176 nM), mNav1.7/SCN9A (EC(50)=102 nM) and hNav1.7 (EC(50)=154 nM). In vivo, causes spontaneous, gradual and long-lasting nocifensive behaviors by intraplantar injection in mice, as well as pronounced swelling of the injected paw. Does not have effect on insects (blowflies). The chain is Myrmicitoxin(1)-Pm2a from Pogonomyrmex maricopa (Maricopa harvester ant).